Consider the following 127-residue polypeptide: Large ribosomal subunit protein bL19 (127 aa).

This sequence belongs to the bacterial ribosomal protein bL19 family.

Its function is as follows. This protein is located at the 30S-50S ribosomal subunit interface and may play a role in the structure and function of the aminoacyl-tRNA binding site. This Jannaschia sp. (strain CCS1) protein is Large ribosomal subunit protein bL19.